Reading from the N-terminus, the 40-residue chain is Photosystem II reaction center protein J (40 aa).

A helical transmembrane segment spans residues 10 to 30; it reads LWLVGTVAGTLVIGLLGVFFY.

It belongs to the PsbJ family. PSII is composed of 1 copy each of membrane proteins PsbA, PsbB, PsbC, PsbD, PsbE, PsbF, PsbH, PsbI, PsbJ, PsbK, PsbL, PsbM, PsbT, PsbX, PsbY, PsbZ, Psb30/Ycf12, at least 3 peripheral proteins of the oxygen-evolving complex and a large number of cofactors. It forms dimeric complexes.

It is found in the plastid. The protein localises to the chloroplast thylakoid membrane. One of the components of the core complex of photosystem II (PSII). PSII is a light-driven water:plastoquinone oxidoreductase that uses light energy to abstract electrons from H(2)O, generating O(2) and a proton gradient subsequently used for ATP formation. It consists of a core antenna complex that captures photons, and an electron transfer chain that converts photonic excitation into a charge separation. This chain is Photosystem II reaction center protein J, found in Adiantum capillus-veneris (Maidenhair fern).